The following is a 389-amino-acid chain: Alpha-2B adrenergic receptor (389 aa).

Residues 1-25 (AIAAVITFLILFTIFGNALVILAVL) form a helical membrane-spanning segment. The Cytoplasmic segment spans residues 26-36 (TSRSLRAPQNL). Residues 37 to 62 (FLVSLAAADILVATLIIPFSLANELL) traverse the membrane as a helical segment. The Extracellular portion of the chain corresponds to 63 to 72 (GYWYFWRTWC). Residues C72 and C151 are joined by a disulfide bond. A helical membrane pass occupies residues 73–95 (EVYLALDVLFCTSSIVHLCAISL). Topologically, residues 96–117 (DRYWAVSRALEYNSKRTPRRIK) are cytoplasmic. The chain crosses the membrane as a helical span at residues 118–140 (CIILTVWLIAAAISLPPLIYKGD). At 141 to 156 (QGPQPRGRPQCMLNQE) the chain is on the extracellular side. The helical transmembrane segment at 157–180 (AWYILSSSIGSFFAPCLIMILVYL) threads the bilayer. Over 181–353 (RIYLIAKRSN…LTREKRFTFV (173 aa)) the chain is Cytoplasmic. 2 disordered regions span residues 192–218 (RGPR…PLAL) and 231–310 (DGEA…HLQQ). Over residues 234-249 (ANGHSKLTGEKERETS) the composition is skewed to basic and acidic residues. The chain crosses the membrane as a helical span at residues 354–377 (LTVVIGVFVLCWFPFFFSYSLGAI). At 378–386 (CPQHCKVPH) the chain is on the extracellular side. Residues 387-389 (GLF) form a helical membrane-spanning segment.

It belongs to the G-protein coupled receptor 1 family. Adrenergic receptor subfamily. ADRA2B sub-subfamily. In terms of assembly, interacts with RAB26. Interacts with PPP1R9B.

Its subcellular location is the cell membrane. Its function is as follows. Alpha-2 adrenergic receptors mediate the catecholamine-induced inhibition of adenylate cyclase through the action of G proteins. The polypeptide is Alpha-2B adrenergic receptor (ADRA2B) (Procavia capensis habessinica (Abyssinian hyrax)).